We begin with the raw amino-acid sequence, 450 residues long: LanC-like protein 2 (450 aa).

Gly2 carries the N-myristoyl glycine lipid modification. The segment at 2-14 (GETMSKRLKFHLG) is interaction with inositol phospholipids. A Phosphotyrosine modification is found at Tyr198.

Belongs to the LanC-like protein family. Interacts with an array of inositol phospholipids such as phosphatidylinositol 3-phosphate (PI3P), phosphatidylinositol 4-phosphate (PI4P) and phosphatidylinositol 5-phosphate (PI5P). PIP-binding enhances membrane association. Myristoylated. Essential for membrane association.

The protein resides in the nucleus. It localises to the cytoplasm. The protein localises to the cell membrane. In terms of biological role, necessary for abscisic acid (ABA) binding on the cell membrane and activation of the ABA signaling pathway in granulocytes. In Mus musculus (Mouse), this protein is LanC-like protein 2 (Lancl2).